Here is a 103-residue protein sequence, read N- to C-terminus: MERQQQQQQQLRNLRDFLLVYNRMTELCFQRCVPSLHHRALDAEEEACLHSCAGKLIHSNHRLMAAYVQLMPALVQRRIADYEAASAVPGVAAEQPGVSPSGS.

The Twin CX3C motif motif lies at 28–52 (CFQRCVPSLHHRALDAEEEACLHSC). Disulfide bonds link Cys28-Cys52 and Cys32-Cys48.

Belongs to the small Tim family. Component of the TIM22 complex, which core is composed of TIMM22, associated with TIMM10 (TIMM10A and/or TIMM10B), TIMM9, AGK and TIMM29. As to expression, ubiquitous, with highest expression in heart, kidney, liver and skeletal muscle.

It is found in the mitochondrion inner membrane. Its function is as follows. Component of the TIM22 complex, a complex that mediates the import and insertion of multi-pass transmembrane proteins into the mitochondrial inner membrane. The TIM22 complex forms a twin-pore translocase that uses the membrane potential as the external driving force. In the TIM22 complex, it may act as a docking point for the soluble 70 kDa complex that guides the target proteins in transit through the aqueous mitochondrial intermembrane space. This Homo sapiens (Human) protein is Mitochondrial import inner membrane translocase subunit Tim10 B (TIMM10B).